Reading from the N-terminus, the 225-residue chain is Thymidylate kinase (225 aa).

10 to 17 (GIDGAGKS) is a binding site for ATP.

The protein belongs to the thymidylate kinase family.

The enzyme catalyses dTMP + ATP = dTDP + ADP. Its function is as follows. Phosphorylation of dTMP to form dTDP in both de novo and salvage pathways of dTTP synthesis. The protein is Thymidylate kinase of Polaromonas sp. (strain JS666 / ATCC BAA-500).